The following is a 301-amino-acid chain: uncharacterized protein (301 aa).

An N-terminal signal peptide occupies residues 1 to 25 (MKFKNTLSIFKILIILFSFYNVAFS). The Extracellular portion of the chain corresponds to 26 to 279 (DDTEKYTFKG…STTGSKDSST (254 aa)). The interval 174–281 (LYTGSSNTPN…TGSKDSSTGN (108 aa)) is disordered. N-linked (GlcNAc...) asparagine glycans are attached at residues N191, N212, N234, and N241. The segment covering 204–234 (SSSDSTNSNSSSTDTASSSPSSSPSSSPSPN) has biased composition (low complexity). A compositionally biased stretch (low complexity) spans 254–281 (GGVETSTAGSSTGTTSSTTGSKDSSTGN). The chain crosses the membrane as a helical span at residues 280-300 (GNSILPTLIIVTFFVLTLVIM). S301 is a topological domain (cytoplasmic).

The protein resides in the membrane. This is an uncharacterized protein from Dictyostelium discoideum (Social amoeba).